Reading from the N-terminus, the 588-residue chain is Adenine deaminase (588 aa).

The protein belongs to the metallo-dependent hydrolases superfamily. Adenine deaminase family. In terms of assembly, homodimer. Mn(2+) is required as a cofactor.

It carries out the reaction adenine + H2O + H(+) = hypoxanthine + NH4(+). The polypeptide is Adenine deaminase (Escherichia coli O9:H4 (strain HS)).